A 265-amino-acid polypeptide reads, in one-letter code: Novel plant SNARE 12 (265 aa).

The Cytoplasmic portion of the chain corresponds to 1 to 217 (MASELPMSPH…IGRQVATDKC (217 aa)). Positions 32 to 106 (LDKIKDSSRQ…ALRKTYLNTL (75 aa)) form a coiled coil. The residue at position 74 (S74) is a Phosphoserine. The region spanning 146–208 (MKRMDETDQA…KKASQLVKEI (63 aa)) is the t-SNARE coiled-coil homology domain. Residues 218–238 (IMAFLFLIVCGVIAIIIVKIV) form a helical; Anchor for type IV membrane protein membrane-spanning segment. At 239 to 265 (NPNNKDIRDIPGLAPPAQSRKLLYFRE) the chain is on the vesicular side.

Belongs to the novel plant SNARE family. In terms of tissue distribution, expressed in roots, stems, flower, siliques and leaves.

Its subcellular location is the membrane. Vesicle trafficking protein that functions in the secretory pathway. The protein is Novel plant SNARE 12 (NPSN12) of Arabidopsis thaliana (Mouse-ear cress).